A 397-amino-acid polypeptide reads, in one-letter code: Elongation factor Tu 2 (397 aa).

Residues 10–206 (KPHVNIGTIG…AIDTWIPEPV (197 aa)) enclose the tr-type G domain. The G1 stretch occupies residues 19 to 26 (GHVDHGKT). 19-26 (GHVDHGKT) contributes to the GTP binding site. T26 contacts Mg(2+). Residues 61–65 (GITIS) are G2. The G3 stretch occupies residues 82–85 (DCPG). GTP is bound by residues 82–86 (DCPGH) and 137–140 (NKCD). The segment at 137–140 (NKCD) is G4. Residues 175-177 (SAL) form a G5 region.

This sequence belongs to the TRAFAC class translation factor GTPase superfamily. Classic translation factor GTPase family. EF-Tu/EF-1A subfamily. As to quaternary structure, monomer.

Its subcellular location is the cytoplasm. It carries out the reaction GTP + H2O = GDP + phosphate + H(+). In terms of biological role, GTP hydrolase that promotes the GTP-dependent binding of aminoacyl-tRNA to the A-site of ribosomes during protein biosynthesis. This Alkaliphilus metalliredigens (strain QYMF) protein is Elongation factor Tu 2.